Reading from the N-terminus, the 199-residue chain is MKQSHFFAHLSRLKLINRWPLMRNVRTENVSEHSLQVAMVAHALAAIKNRKFGGQLNAEHIALLAMYHDTSEVLTGDLPTPVKYFNSQIAQEYKAIEKIAQQKLVDMAPDELRDIFAPLIDENAWSEEEQAIVKQADALCAYLKCLEELSAGNNEFKLAKTRLEKTLALRRSQEMDYFMAVFVPSFHLSLDEISQDSPL.

Residues 18 to 19 (RW) and histidine 33 contribute to the substrate site. Positions 30 to 142 (VSEHSLQVAM…VKQADALCAY (113 aa)) constitute an HD domain. 3 residues coordinate a divalent metal cation: histidine 33, histidine 68, and aspartate 69. Substrate is bound by residues aspartate 69, 77–80 (DLPT), and aspartate 137. Aspartate 137 is an a divalent metal cation binding site.

This sequence belongs to the 5DNU family. As to quaternary structure, homodimer. It depends on a divalent metal cation as a cofactor.

The protein localises to the cytoplasm. The enzyme catalyses a 2'-deoxyribonucleoside 5'-phosphate + H2O = a 2'-deoxyribonucleoside + phosphate. Its function is as follows. Catalyzes the strictly specific dephosphorylation of 2'-deoxyribonucleoside 5'-monophosphates. The chain is 5'-deoxynucleotidase YfbR from Salmonella arizonae (strain ATCC BAA-731 / CDC346-86 / RSK2980).